Reading from the N-terminus, the 867-residue chain is Protein argonaute-3 (867 aa).

The segment at 1–83 is necessary and sufficient for interaction with krimp; that stretch reads MSGRGNLLSL…IDTLKTDDHT (83 aa). Positions 1–289 are interaction with papi; sequence MSGRGNLLSL…CDVSHRILCQ (289 aa). 3 positions are modified to symmetric dimethylarginine: Arg-4, Arg-68, and Arg-70. Residues 291 to 402 form the PAZ domain; it reads TVLEMLVDLY…LIPELCYLTG (112 aa). In terms of domain architecture, Piwi spans 566–853; it reads MVVCICHNRR…LAYLIGQSIQ (288 aa).

This sequence belongs to the argonaute family. Piwi subfamily. In terms of assembly, component of the ping-pong piRNA processing (4P) complex consisting of krimp, aub and AGO3. Interacts (via N-terminus when not methylated on arginine residues) with krimp (via non-canonical tudor domain); this interaction leads to symmetrical dimethylation on AGO3 arginine residues and its subsequent dissociation from krimp. Krimp associated AGO3 is mostly free of piRNA binding and the interaction plays an important role in the loading of AGO3 with piRNAs; piRNA binding may stimulate dissociation of the two proteins. May form part of a piRNA processing complex consisting of tud, aub and AGO3. Interacts (when symmetrically dimethylated on arginine residues) with tud. Forms a complex with smg, twin, aub, nos mRNA and piRNAs that target the nos 3'-untranslated region, in early embryos. Interacts (via the N-terminal region when symmetrically methylated on arginine residues) with papi (via C-terminus); this interaction is RNA-independent and may be required for AGO3 localization to the nuage. Interacts with TER94 and tral. Post-translationally, symmetrically dimethylated on Arg-4, Arg-68 and Arg-70, most likely by csul/PRMT5/DART5. Methylation state probably functions as an indicator of its piRNA binding state. In ovary, expressed in germline stem cells, germline cyst cells, nurse cells and oocytes during early stages. Also found in the somatic cap cells of the germarium. In testis, expressed in germline stem cells, primary gonial cells and early spermatocytes. No expression detected in the somatic hub cells at the apical tip of the testis (at protein level). Expressed in neurons throughout the adult brain and in the mushroom body subdivision in the peduncle. In the mushroom body, expressed only in gamma and core alpha-beta neurons.

The protein resides in the cytoplasm. It localises to the perinuclear region. Its subcellular location is the cytoplasmic ribonucleoprotein granule. Functionally, component of the perinuclear meiotic nuage, a germline-specific subcellular membraneless ribonucleoprotein compartment involved in production of transposable element-repressing Piwi-interacting RNA (piRNA)-induced silencing complexes (piRISCs), which are essential for maintaining germline integrity during oogenesis. Acts via the Piwi-interacting RNA (piRNA) metabolic process, which mediates the repression of transposable elements during meiosis by forming complexes composed of piRNAs and Piwi proteins and governs the methylation and subsequent repression of transposons. Piwi protein that directly binds piRNAs, a class of 24 to 30 nucleotide RNAs that are generated by a Dicer-independent mechanism and are primarily derived from transposons and other repeated sequence elements. Associates predominantly with sense piRNAs that contain adenine at nucleotide 10, but shows no preference for uridine at the 5' end. Shows RNA cleavage or slicer activity. Together with Piwi protein aub recruited to subregions of the perinuclear nuage by krimp, which coordinates their activity in the ping-pong amplification step of secondary piRNA biogenesis. Krimp recruits piRNA bound aub and unbound AGO3, bringing them into close proximity to facilitate the loading onto AGO3 of freshly cut piRNAs generated by aub cleavage of target sequences; krimp recognizes the piRNA loading state of the Piwi proteins via symmetrically dimethylated arginine modification in their N-terminus. Important for asymmetric ping-pong amplification to bias production towards antisense piRNAs capable of silencing transposable elements. In testis, associates with Su(Ste) and AT-chX-1 piRNAs mostly produced from antisense precursors. In the germline, acts to amplify pools of antisense piRNAs, among others Su(Ste), AT-chX-1 and roo, and to limit sense piRNA accumulation. Forms a complex with smg, twin, aub and specific piRNAs that targets nos mRNA (and probably other maternal mRNAS) for deadenylation promoting its decay during early embryogenesis. Involved in transposon silencing in the adult brain. The protein is Protein argonaute-3 of Drosophila melanogaster (Fruit fly).